Here is a 330-residue protein sequence, read N- to C-terminus: (4-{4-[2-(gamma-L-glutamylamino)ethyl]phenoxymethyl}furan-2-yl)methanamine synthase (330 aa).

Belongs to the MfnF family.

It carries out the reaction gamma-L-glutamyltyramine + [5-(aminomethyl)furan-3-yl]methyl diphosphate = (4-{4-[2-(gamma-L-glutamylamino)ethyl]phenoxymethyl}furan-2-yl)methanamine + diphosphate. It participates in cofactor biosynthesis; methanofuran biosynthesis. Catalyzes the condensation between 5-(aminomethyl)-3-furanmethanol diphosphate (F1-PP) and gamma-glutamyltyramine to produce APMF-Glu. The polypeptide is (4-{4-[2-(gamma-L-glutamylamino)ethyl]phenoxymethyl}furan-2-yl)methanamine synthase (Methanocaldococcus jannaschii (strain ATCC 43067 / DSM 2661 / JAL-1 / JCM 10045 / NBRC 100440) (Methanococcus jannaschii)).